Reading from the N-terminus, the 616-residue chain is Dihydroxy-acid dehydratase (616 aa).

Asp-81 lines the Mg(2+) pocket. Cys-122 is a binding site for [2Fe-2S] cluster. The Mg(2+) site is built by Asp-123 and Lys-124. Lys-124 carries the N6-carboxylysine modification. Cys-195 is a binding site for [2Fe-2S] cluster. Glu-491 serves as a coordination point for Mg(2+). Ser-517 serves as the catalytic Proton acceptor.

Belongs to the IlvD/Edd family. Homodimer. [2Fe-2S] cluster is required as a cofactor. Requires Mg(2+) as cofactor.

The catalysed reaction is (2R)-2,3-dihydroxy-3-methylbutanoate = 3-methyl-2-oxobutanoate + H2O. It carries out the reaction (2R,3R)-2,3-dihydroxy-3-methylpentanoate = (S)-3-methyl-2-oxopentanoate + H2O. The protein operates within amino-acid biosynthesis; L-isoleucine biosynthesis; L-isoleucine from 2-oxobutanoate: step 3/4. Its pathway is amino-acid biosynthesis; L-valine biosynthesis; L-valine from pyruvate: step 3/4. Its function is as follows. Functions in the biosynthesis of branched-chain amino acids. Catalyzes the dehydration of (2R,3R)-2,3-dihydroxy-3-methylpentanoate (2,3-dihydroxy-3-methylvalerate) into 2-oxo-3-methylpentanoate (2-oxo-3-methylvalerate) and of (2R)-2,3-dihydroxy-3-methylbutanoate (2,3-dihydroxyisovalerate) into 2-oxo-3-methylbutanoate (2-oxoisovalerate), the penultimate precursor to L-isoleucine and L-valine, respectively. The polypeptide is Dihydroxy-acid dehydratase (Edwardsiella ictaluri (strain 93-146)).